A 539-amino-acid polypeptide reads, in one-letter code: Phosphoenolpyruvate carboxykinase (ATP) (539 aa).

Substrate is bound by residues Arg64, Tyr206, and Lys212. ATP contacts are provided by residues Lys212, His231, and 247–255 (GLSGTGKTT). Residues Lys212 and His231 each coordinate Mn(2+). Asp268 is a binding site for Mn(2+). ATP contacts are provided by residues Glu296, Arg332, 448-449 (RI), and Thr454. Arg332 serves as a coordination point for substrate.

It belongs to the phosphoenolpyruvate carboxykinase (ATP) family. Monomer. Requires Mn(2+) as cofactor.

The protein localises to the cytoplasm. The enzyme catalyses oxaloacetate + ATP = phosphoenolpyruvate + ADP + CO2. It functions in the pathway carbohydrate biosynthesis; gluconeogenesis. In terms of biological role, involved in the gluconeogenesis. Catalyzes the conversion of oxaloacetate (OAA) to phosphoenolpyruvate (PEP) through direct phosphoryl transfer between the nucleoside triphosphate and OAA. In Yersinia pseudotuberculosis serotype O:1b (strain IP 31758), this protein is Phosphoenolpyruvate carboxykinase (ATP).